Reading from the N-terminus, the 244-residue chain is Ubiquitin carboxyl-terminal hydrolase mug105 (244 aa).

Residue Cys42 is the Nucleophile of the active site. Residue His165 is the Proton acceptor of the active site. Asp183 is a catalytic residue.

This sequence belongs to the peptidase C78 family. ZUFSP subfamily.

The protein resides in the cytoplasm. It catalyses the reaction Thiol-dependent hydrolysis of ester, thioester, amide, peptide and isopeptide bonds formed by the C-terminal Gly of ubiquitin (a 76-residue protein attached to proteins as an intracellular targeting signal).. Functionally, deubiquitinase with endodeubiquitinase activity that preferentially cleaves 'Lys-48'-linked polyubiquitin chains. Shows only weak activity against 'Lys-63' and 'Lys-11'-linked chains. Has a role in meiosis. In Schizosaccharomyces pombe (strain 972 / ATCC 24843) (Fission yeast), this protein is Ubiquitin carboxyl-terminal hydrolase mug105 (mug105).